Consider the following 231-residue polypeptide: Cytidylate kinase (231 aa).

18–26 is a binding site for ATP; it reads GPSGTGKSS.

The protein belongs to the cytidylate kinase family. Type 1 subfamily.

It localises to the cytoplasm. It carries out the reaction CMP + ATP = CDP + ADP. The catalysed reaction is dCMP + ATP = dCDP + ADP. The protein is Cytidylate kinase of Streptomyces coelicolor (strain ATCC BAA-471 / A3(2) / M145).